The chain runs to 226 residues: 3-dehydroquinate dehydratase (226 aa).

Residues 33-35 (ELR) and R65 contribute to the 3-dehydroquinate site. The active-site Proton donor/acceptor is H120. The Schiff-base intermediate with substrate role is filled by K147. 3-dehydroquinate is bound by residues R186, S205, and Q209.

The protein belongs to the type-I 3-dehydroquinase family. In terms of assembly, homodimer.

It carries out the reaction 3-dehydroquinate = 3-dehydroshikimate + H2O. Its pathway is metabolic intermediate biosynthesis; chorismate biosynthesis; chorismate from D-erythrose 4-phosphate and phosphoenolpyruvate: step 3/7. Involved in the third step of the chorismate pathway, which leads to the biosynthesis of aromatic amino acids. Catalyzes the cis-dehydration of 3-dehydroquinate (DHQ) and introduces the first double bond of the aromatic ring to yield 3-dehydroshikimate. This chain is 3-dehydroquinate dehydratase, found in Thermodesulfovibrio yellowstonii (strain ATCC 51303 / DSM 11347 / YP87).